Reading from the N-terminus, the 188-residue chain is uncharacterized protein (188 aa).

Transmembrane regions (helical) follow at residues 6–26, 43–63, and 110–130; these read MIVF…SLPL, FAGR…ILFA, and ALFL…MIAA.

It localises to the membrane. This is an uncharacterized protein from Schizosaccharomyces pombe (strain 972 / ATCC 24843) (Fission yeast).